Consider the following 238-residue polypeptide: ATP synthase subunit a (238 aa).

5 consecutive transmembrane segments (helical) span residues 17–37 (LSDM…AVAA), 75–95 (FLTL…LGLP), 112–132 (DATV…YYGV), 179–199 (ILLG…AVGA), and 202–222 (FPIM…AFIF).

It belongs to the ATPase A chain family. F-type ATPases have 2 components, CF(1) - the catalytic core - and CF(0) - the membrane proton channel. CF(1) has five subunits: alpha(3), beta(3), gamma(1), delta(1), epsilon(1). CF(0) has three main subunits: a(1), b(2) and c(9-12). The alpha and beta chains form an alternating ring which encloses part of the gamma chain. CF(1) is attached to CF(0) by a central stalk formed by the gamma and epsilon chains, while a peripheral stalk is formed by the delta and b chains.

It localises to the cell membrane. Its function is as follows. Key component of the proton channel; it plays a direct role in the translocation of protons across the membrane. In Bacillus sp. (strain PS3), this protein is ATP synthase subunit a.